A 197-amino-acid polypeptide reads, in one-letter code: Probable molybdenum cofactor guanylyltransferase (197 aa).

GTP contacts are provided by residues Leu-9–Gly-11, Lys-21, Asp-65, and Asp-94. Asp-94 provides a ligand contact to Mg(2+).

Belongs to the MobA family. Mg(2+) is required as a cofactor.

It localises to the cytoplasm. The enzyme catalyses Mo-molybdopterin + GTP + H(+) = Mo-molybdopterin guanine dinucleotide + diphosphate. Transfers a GMP moiety from GTP to Mo-molybdopterin (Mo-MPT) cofactor (Moco or molybdenum cofactor) to form Mo-molybdopterin guanine dinucleotide (Mo-MGD) cofactor. The protein is Probable molybdenum cofactor guanylyltransferase of Carboxydothermus hydrogenoformans (strain ATCC BAA-161 / DSM 6008 / Z-2901).